The primary structure comprises 476 residues: tRNA(Ile)-lysidine synthase (476 aa).

25–30 is a binding site for ATP; sequence SGGPDS.

The protein belongs to the tRNA(Ile)-lysidine synthase family.

The protein localises to the cytoplasm. The catalysed reaction is cytidine(34) in tRNA(Ile2) + L-lysine + ATP = lysidine(34) in tRNA(Ile2) + AMP + diphosphate + H(+). Ligates lysine onto the cytidine present at position 34 of the AUA codon-specific tRNA(Ile) that contains the anticodon CAU, in an ATP-dependent manner. Cytidine is converted to lysidine, thus changing the amino acid specificity of the tRNA from methionine to isoleucine. The polypeptide is tRNA(Ile)-lysidine synthase (Bacillus licheniformis (strain ATCC 14580 / DSM 13 / JCM 2505 / CCUG 7422 / NBRC 12200 / NCIMB 9375 / NCTC 10341 / NRRL NRS-1264 / Gibson 46)).